A 300-amino-acid chain; its full sequence is MLTKEFAQRVELSEKQVRKIVQHLEERGYHLSKTEYRGREATDFKEDDIELFTDIANKVKQTNSYDLAFEELEKEKDFLQVIVKDEDSQLPTDQNVAQLVEDLRSEIQKMREERQMLGQMINQVHQQQQELKELQTDITTKLDSNAQSLKSIQNSQEAIQSAQEQQSKDIAKANELKDSELRSHFDSMSNSASISQSNVASQSTTASLSQSESANDSMSSSLSESNSITSESNTNSKSEIESKSTSTSEFLSESGSVSNSEKSESISHSQSTSATPSSQSTYQQQPKEEKKGFFARLFNL.

The stretch at 67–179 (LAFEELEKEK…IAKANELKDS (113 aa)) forms a coiled coil. The span at 203–285 (STTASLSQSE…PSSQSTYQQQ (83 aa)) shows a compositional bias: low complexity. Residues 203-300 (STTASLSQSE…KGFFARLFNL (98 aa)) are disordered.

This is an uncharacterized protein from Staphylococcus epidermidis (strain ATCC 12228 / FDA PCI 1200).